We begin with the raw amino-acid sequence, 802 residues long: Protein SBE22 (802 aa).

Disordered stretches follow at residues 207–230 (SSTI…RSNS) and 323–345 (SGDP…QRHN).

The protein belongs to the SBE2 family.

It is found in the cytoplasm. The protein resides in the golgi apparatus. Functionally, with SBE2, is involved in cell wall integrity and polarity processes like bud growth. The polypeptide is Protein SBE22 (SBE22) (Vanderwaltozyma polyspora (strain ATCC 22028 / DSM 70294 / BCRC 21397 / CBS 2163 / NBRC 10782 / NRRL Y-8283 / UCD 57-17) (Kluyveromyces polysporus)).